Reading from the N-terminus, the 164-residue chain is Ribosome maturation factor RimM (164 aa).

In terms of domain architecture, PRC barrel spans 90–161; sequence KGSYFIADLI…TVTIKPLEIW (72 aa).

This sequence belongs to the RimM family. Binds ribosomal protein uS19.

The protein resides in the cytoplasm. Functionally, an accessory protein needed during the final step in the assembly of 30S ribosomal subunit, possibly for assembly of the head region. Essential for efficient processing of 16S rRNA. May be needed both before and after RbfA during the maturation of 16S rRNA. It has affinity for free ribosomal 30S subunits but not for 70S ribosomes. The chain is Ribosome maturation factor RimM from Clostridium botulinum (strain ATCC 19397 / Type A).